Reading from the N-terminus, the 233-residue chain is Purine nucleoside phosphorylase DeoD-type (233 aa).

His-4 serves as a coordination point for a purine D-ribonucleoside. Residues Gly-20, Arg-24, Arg-43, and 87-90 (RVGT) each bind phosphate. Residues 179–181 (EME) and 203–204 (SD) each bind a purine D-ribonucleoside. Asp-204 functions as the Proton donor in the catalytic mechanism.

The protein belongs to the PNP/UDP phosphorylase family. Homohexamer; trimer of homodimers.

It carries out the reaction a purine D-ribonucleoside + phosphate = a purine nucleobase + alpha-D-ribose 1-phosphate. It catalyses the reaction a purine 2'-deoxy-D-ribonucleoside + phosphate = a purine nucleobase + 2-deoxy-alpha-D-ribose 1-phosphate. Its function is as follows. Catalyzes the reversible phosphorolytic breakdown of the N-glycosidic bond in the beta-(deoxy)ribonucleoside molecules, with the formation of the corresponding free purine bases and pentose-1-phosphate. In Clostridium novyi (strain NT), this protein is Purine nucleoside phosphorylase DeoD-type.